Here is a 432-residue protein sequence, read N- to C-terminus: uncharacterized protein (432 aa).

Disordered stretches follow at residues 37–61, 127–151, and 298–378; these read DGIGGAVGRDGDSLDNDGDSSSADC, RDHDVDSGGRDSNSKVKRKSDDTRY, and SVSS…NHQC. The segment covering 312-335 has biased composition (polar residues); that stretch reads DSSTLANTQGFREDQSQQQHTPSP. A compositionally biased stretch (low complexity) spans 341-366; the sequence is SSLSHQFHQSIHQSHQHHQSIYQSQH.

This is an uncharacterized protein from Arabidopsis thaliana (Mouse-ear cress).